A 2442-amino-acid polypeptide reads, in one-letter code: MAENLLDGPPNPKRAKLSSPGFSANDSTDFGSLFDLENDLPDELIPNGGELGLLNSGNLVPDAASKHKQLSELLRGGSGSSINPGIGNVSASSPVQQGLGGQAQGQPNSANMASLSAMGKSPLSQGDSSAPSLPKQAASTSGPTPAASQALNPQAQKQVGLATSSPATSQTGPGICMNANFNQTHPGLLNSNSGHSLINQASQGQAQVMNGSLGAAGRGRGAGMPYPTPAMQGASSSVLAETLTQVSPQMTGHAGLNTAQAGGMAKMGITGNTSPFGQPFSQAGGQPMGATGVNPQLASKQSMVNSLPTFPTDIKNTSVTNVPNMSQMQTSVGIVPTQAIATGPTADPEKRKLIQQQLVLLLHAHKCQRREQANGEVRACSLPHCRTMKNVLNHMTHCQAGKACQVAHCASSRQIISHWKNCTRHDCPVCLPLKNASDKRNQQTILGSPASGIQNTIGSVGTGQQNATSLSNPNPIDPSSMQRAYAALGLPYMNQPQTQLQPQVPGQQPAQPQTHQQMRTLNPLGNNPMNIPAGGITTDQQPPNLISESALPTSLGATNPLMNDGSNSGNIGTLSTIPTAAPPSSTGVRKGWHEHVTQDLRSHLVHKLVQAIFPTPDPAALKDRRMENLVAYAKKVEGDMYESANSRDEYYHLLAEKIYKIQKELEEKRRSRLHKQGILGNQPALPAPGAQPPVIPQAQPVRPPNGPLSLPVNRMQVSQGMNSFNPMSLGNVQLPQAPMGPRAASPMNHSVQMNSMGSVPGMAISPSRMPQPPNMMGAHTNNMMAQAPAQSQFLPQNQFPSSSGAMSVGMGQPPAQTGVSQGQVPGAALPNPLNMLGPQASQLPCPPVTQSPLHPTPPPASTAAGMPSLQHTTPPGMTPPQPAAPTQPSTPVSSSGQTPTPTPGSVPSATQTQSTPTVQAAAQAQVTPQPQTPVQPPSVATPQSSQQQPTPVHAQPPGTPLSQAAASIDNRVPTPSSVASAETNSQQPGPDVPVLEMKTETQAEDTEPDPGESKGEPRSEMMEEDLQGASQVKEETDIAEQKSEPMEVDEKKPEVKVEVKEEEESSSNGTASQSTSPSQPRKKIFKPEELRQALMPTLEALYRQDPESLPFRQPVDPQLLGIPDYFDIVKNPMDLSTIKRKLDTGQYQEPWQYVDDVWLMFNNAWLYNRKTSRVYKFCSKLAEVFEQEIDPVMQSLGYCCGRKYEFSPQTLCCYGKQLCTIPRDAAYYSYQNRYHFCEKCFTEIQGENVTLGDDPSQPQTTISKDQFEKKKNDTLDPEPFVDCKECGRKMHQICVLHYDIIWPSGFVCDNCLKKTGRPRKENKFSAKRLQTTRLGNHLEDRVNKFLRRQNHPEAGEVFVRVVASSDKTVEVKPGMKSRFVDSGEMSESFPYRTKALFAFEEIDGVDVCFFGMHVQEYGSDCPPPNTRRVYISYLDSIHFFRPRCLRTAVYHEILIGYLEYVKKLGYVTGHIWACPPSEGDDYIFHCHPPDQKIPKPKRLQEWYKKMLDKAFAERIIHDYKDIFKQATEDRLTSAKELPYFEGDFWPNVLEESIKELEQEEEERKKEESTAASETTEGSQGDSKNAKKKNNKKTNKNKSSISRANKKKPSMPNVSNDLSQKLYATMEKHKEVFFVIHLHAGPVINTLPPIVDPDPLLSCDLMDGRDAFLTLARDKHWEFSSLRRSKWSTLCMLVELHTQGQDRFVYTCNECKHHVETRWHCTVCEDYDLCINCYNTKSHAHKMVKWGLGLDDEGSSQGEPQSKSPQESRRLSIQRCIQSLVHACQCRNANCSLPSCQKMKRVVQHTKGCKRKTNGGCPVCKQLIALCCYHAKHCQENKCPVPFCLNIKHKLRQQQIQHRLQQAQLMRRRMATMNTRNVPQQSLPSPTSAPPGTPTQQPSTPQTPQPPAQPQPSPVSMSPAGFPSVARTQPPTTVSTGKPTSQVPAPPPPAQPPPAAVEAARQIEREAQQQQHLYRVNINNSMPPGRTGMGTPGSQMAPVSLNVPRPNQVSGPVMPSMPPGQWQQAPLPQQQPMPGLPRPVISMQAQAAVAGPRMPSVQPPRSISPSALQDLLRTLKSPSSPQQQQQVLNILKSNPQLMAAFIKQRTAKYVANQPGMQPQPGLQSQPGMQPQPGMHQQPSLQNLNAMQAGVPRPGVPPQQQAMGGLNPQGQALNIMNPGHNPNMASMNPQYREMLRRQLLQQQQQQQQQQQQQQQQQQGSAGMAGGMAGHGQFQQPQGPGGYPPAMQQQQRMQQHLPLQGSSMGQMAAQMGQLGQMGQPGLGADSTPNIQQALQQRILQQQQMKQQIGSPGQPNPMSPQQHMLSGQPQASHLPGQQIATSLSNQVRSPAPVQSPRPQSQPPHSSPSPRIQPQPSPHHVSPQTGSPHPGLAVTMASSIDQGHLGNPEQSAMLPQLNTPSRSALSSELSLVGDTTGDTLEKFVEGL.

Disordered regions lie at residues 1-41 (MAEN…NDLP) and 74-179 (LRGG…CMNA). An N-acetylalanine modification is found at Ala2. Residues 20–30 (PGFSANDSTDF) are compositionally biased toward polar residues. The segment covering 80 to 90 (SSINPGIGNVS) has biased composition (low complexity). Phosphoserine is present on Ser121. The span at 122-131 (PLSQGDSSAP) shows a compositional bias: polar residues. At Ser124 the chain carries Phosphoserine; by ATM. The segment covering 136-150 (QAASTSGPTPAASQA) has biased composition (low complexity). Residues 151–172 (LNPQAQKQVGLATSSPATSQTG) are compositionally biased toward polar residues. Arg220 is subject to Omega-N-methylarginine. The segment at 227–410 (PTPAMQGASS…GKACQVAHCA (184 aa)) is interaction with SRCAP. The disordered stretch occupies residues 266-290 (KMGITGNTSPFGQPFSQAGGQPMGA). A compositionally biased stretch (polar residues) spans 270–284 (TGNTSPFGQPFSQAG). Residues 347–433 (DPEKRKLIQQ…RHDCPVCLPL (87 aa)) form a TAZ-type 1 zinc finger. Zn(2+)-binding residues include His363, Cys367, Cys380, Cys385, His394, Cys398, Cys404, Cys409, His418, Cys422, Cys427, and Cys430. The 80-residue stretch at 587–666 (GVRKGWHEHV…KIYKIQKELE (80 aa)) folds into the KIX domain. Asymmetric dimethylarginine is present on residues Arg601 and Arg625. Lys657 carries the post-translational modification N6-acetyllysine. Polar residues-rich tracts occupy residues 794–805 (LPQNQFPSSSGA) and 814–823 (PAQTGVSQGQ). The tract at residues 794–1083 (LPQNQFPSSS…STSPSQPRKK (290 aa)) is disordered. 2 stretches are compositionally biased toward pro residues: residues 844–860 (PCPP…PPPA) and 876–885 (GMTPPQPAAP). 2 stretches are compositionally biased toward low complexity: residues 886 to 929 (TQPS…VTPQ) and 937 to 952 (PSVA…PTPV). The segment covering 973–988 (PTPSSVASAETNSQQP) has biased composition (polar residues). Lys998 is covalently cross-linked (Glycyl lysine isopeptide (Lys-Gly) (interchain with G-Cter in SUMO1)). Residues 1011–1021 (GESKGEPRSEM) are compositionally biased toward basic and acidic residues. Lys1014 carries the N6-acetyllysine modification. Ser1030 bears the Phosphoserine mark. Positions 1032-1059 (VKEETDIAEQKSEPMEVDEKKPEVKVEV) are enriched in basic and acidic residues. Residues Lys1033 and Lys1056 each participate in a glycyl lysine isopeptide (Lys-Gly) (interchain with G-Cter in SUMO1) cross-link. A compositionally biased stretch (low complexity) spans 1066-1078 (SSNGTASQSTSPS). Phosphoserine is present on Ser1076. The Bromo domain maps to 1085 to 1192 (FKPEELRQAL…EVFEQEIDPV (108 aa)). Residues 1124–1170 (DYFDIVKNPMDLSTIKRKLDTGQYQEPWQYVDDVWLMFNNAWLYNRK) are interaction with histone. Positions 1162 to 1180 (NNAWLYNRKTSRVYKFCSK) are interaction with ASF1A. N6-acetyllysine is present on Lys1216. In terms of domain architecture, CBP/p300-type HAT spans 1323 to 1700 (KFSAKRLQTT…MLVELHTQGQ (378 aa)). Phosphoserine; by IKKA is present on residues Ser1382 and Ser1386. The tract at residues 1433–1435 (YLD) is interaction with histone. Acetyl-CoA contacts are provided by residues 1434-1436 (LDS), 1446-1447 (RT), Ile1493, Arg1498, and Trp1502. Residues 1460–1891 (YVKKLGYVTG…LPSPTSAPPG (432 aa)) are interaction with TRERF1. A compositionally biased stretch (basic and acidic residues) spans 1556–1568 (LEQEEEERKKEES). A disordered region spans residues 1556–1615 (LEQEEEERKKEESTAASETTEGSQGDSKNAKKKNNKKTNKNKSSISRANKKKPSMPNVSN). N6-acetyllysine is present on residues Lys1583, Lys1591, Lys1592, Lys1595, and Lys1597. The span at 1585–1595 (AKKKNNKKTNK) shows a compositional bias: basic residues. A ZZ-type zinc finger spans residues 1702-1750 (RFVYTCNECKHHVETRWHCTVCEDYDLCINCYNTKSHAHKMVKWGLGLD). Zn(2+) contacts are provided by Cys1707, Cys1710, Cys1720, Cys1723, Cys1729, Cys1732, His1738, and His1740. Residues Lys1741 and Lys1744 each carry the N6-acetyllysine modification. Ser1763 is subject to Phosphoserine. A TAZ-type 2 zinc finger spans residues 1765-1846 (QESRRLSIQR…KCPVPFCLNI (82 aa)). Disordered regions lie at residues 1874 to 1959 (TRNV…VEAA) and 1977 to 2028 (INNS…PLPQ). Residues 1900-1912 (PQTPQPPAQPQPS) are compositionally biased toward pro residues. Polar residues predominate over residues 1925-1940 (ARTQPPTTVSTGKPTS). Residues 1943–1954 (PAPPPPAQPPPA) are compositionally biased toward pro residues. The segment covering 2018–2027 (PGQWQQAPLP) has biased composition (low complexity). Ser2063, Ser2076, and Ser2079 each carry phosphoserine. 5 stretches are compositionally biased toward low complexity: residues 2112–2137 (QPGM…HQQP), 2146–2160 (QAGV…QQQA), 2196–2219 (QLLQ…QGSA), 2228–2263 (HGQF…SMGQ), and 2294–2305 (RILQQQQMKQQI). Disordered regions lie at residues 2112–2263 (QPGM…SMGQ) and 2294–2433 (RILQ…TTGD). 2 stretches are compositionally biased toward polar residues: residues 2315 to 2327 (SPQQ…QPQA) and 2334 to 2343 (QIATSLSNQV). The segment covering 2349 to 2372 (VQSPRPQSQPPHSSPSPRIQPQPS) has biased composition (pro residues). Ser2351 bears the Phosphoserine mark. Residues 2411–2424 (QLNTPSRSALSSEL) show a composition bias toward polar residues.

As to quaternary structure, found in a complex containing NCOA2; NCOA3; IKKA; IKKB and IKBKG. Probably part of a complex with HIF1A and EP300. Interacts with GATA1; the interaction results in acetylation and enhancement of transcriptional activity of GATA1. Interacts with MAF and ZCCHC12. Interacts with DAXX; the interaction is dependent on CBP sumoylation and results in suppression of the transcriptional activity via recruitment of HDAC2 to DAXX. Interacts with phosphorylated CREB1. Interacts with CITED4 (C-terminal region). Interacts (via the TAZ-type 1 domain) with HIF1A. Interacts with SRCAP, CARM1, ELF3, MLLT7/FOXO4, N4BP2, NCOA1, NCOA3, NCOA6, PCAF, DDX5, DDX17, PELP1, PML, SMAD1, SMAD2, SMAD3, SPIB and TRERF1. Interacts with KLF1; the interaction results in acetylation of KLF1 and enhancement of its transcriptional activity. Interacts with MTDH. Interacts with NFATC4. Interacts with MAFG; the interaction acetylates MAFG in the basic region and stimulates NFE2 transcriptional activity through increasing its DNA-binding activity. Interacts with IRF2; the interaction acetylates IRF2 and regulates its activity on the H4 promoter. Interacts with IRF3 (when phosphorylated); forming the dsRNA-activated factor 1 (DRAF1), a complex which activates the transcription of the type I interferon genes. Interacts (via N-terminus) with SS18L1/CREST (via C-terminus). Interacts with MECOM. Interacts with CITED1 (via C-terminus). Interacts with FOXO1; the interaction acetylates FOXO1 and inhibits its transcriptional activity. Interacts with NPAS2, CLOCK and BMAL1. Interacts with ASF1A and ASF1B; this promotes histone acetylation. Interacts with acetylated TP53/p53 and with the acetylated histones H3 and H4. Interacts (via transactivation domain and C-terminus) with PCNA; the interaction occurs on chromatin in UV-irradiated damaged cells. Interacts with DHX9 (via N-terminus); this interaction mediates association with RNA polymerase II holoenzyme and stimulates CREB-dependent transcriptional activation. Interacts with SMAD4; negatively regulated by ZBTB7A. Interacts with DUX4 (via C-terminus). Forms a complex with KMT2A and CREB1. Interacts with DDX3X; this interaction may facilitate HNF4A acetylation. Interacts with MSX1; the interaction may inhibit MSX1 autoinactivation. Interacts with ACSS2. (Microbial infection) Interacts with HTLV-1 Tax, p30II and HBZ. In terms of assembly, (Microbial infection) Interacts with human herpes virus 8/HHV-8 protein vIRF-1; this interaction inhibits CREBBP binding to IRF3. As to quaternary structure, (Microbial infection) Interacts with HIV-1 Tat. In terms of processing, methylation of the KIX domain by CARM1 blocks association with CREB. This results in the blockade of CREB signaling, and in activation of apoptotic response. Post-translationally, phosphorylated by CHUK/IKKA at Ser-1382 and Ser-1386; these phosphorylations promote cell growth by switching the binding preference of CREBBP from TP53 to NF-kappa-B. Phosphorylated by _ at Ser-124 in response to DNA damage, promoting interaction with MRE11 and lactylation of MRE11. Sumoylation negatively regulates transcriptional activity via the recruitment of DAAX. In terms of processing, autoacetylation is required for binding to protein substrates, such as acetylated histones and acetylated TP53/p53. Autoacetylation is induced by glucose and fatty acids.

It localises to the cytoplasm. Its subcellular location is the nucleus. It catalyses the reaction L-lysyl-[histone] + acetyl-CoA = N(6)-acetyl-L-lysyl-[histone] + CoA + H(+). It carries out the reaction L-lysyl-[protein] + acetyl-CoA = N(6)-acetyl-L-lysyl-[protein] + CoA + H(+). The catalysed reaction is (S)-lactoyl-CoA + L-lysyl-[protein] = N(6)-[(S)-lactoyl]-L-lysyl-[protein] + CoA + H(+). In terms of biological role, acetylates histones, giving a specific tag for transcriptional activation. Mediates acetylation of histone H3 at 'Lys-18' and 'Lys-27' (H3K18ac and H3K27ac, respectively). Also acetylates non-histone proteins, like DDX21, FBL, IRF2, MAFG, NCOA3, POLR1E/PAF53 and FOXO1. Binds specifically to phosphorylated CREB and enhances its transcriptional activity toward cAMP-responsive genes. Acts as a coactivator of ALX1. Acts as a circadian transcriptional coactivator which enhances the activity of the circadian transcriptional activators: NPAS2-BMAL1 and CLOCK-BMAL1 heterodimers. Acetylates PCNA; acetylation promotes removal of chromatin-bound PCNA and its degradation during nucleotide excision repair (NER). Acetylates POLR1E/PAF53, leading to decreased association of RNA polymerase I with the rDNA promoter region and coding region. Acetylates DDX21, thereby inhibiting DDX21 helicase activity. Acetylates FBL, preventing methylation of 'Gln-105' of histone H2A (H2AQ104me). In addition to protein acetyltransferase, can use different acyl-CoA substrates, such as lactoyl-CoA, and is able to mediate protein lactylation. Catalyzes lactylation of MRE11 in response to DNA damage, thereby promoting DNA double-strand breaks (DSBs) via homologous recombination (HR). Functions as a transcriptional coactivator for SMAD4 in the TGF-beta signaling pathway. The polypeptide is CREB-binding protein (Homo sapiens (Human)).